We begin with the raw amino-acid sequence, 587 residues long: Aspartate--tRNA ligase (587 aa).

Glu173 contributes to the L-aspartate binding site. The aspartate stretch occupies residues 197 to 200 (QTLK). Position 219 (Arg219) interacts with L-aspartate. ATP-binding positions include 219–221 (RDE) and Gln228. His446 provides a ligand contact to L-aspartate. Residue Glu480 coordinates ATP. Arg487 contacts L-aspartate. Residue 532–535 (GLDR) participates in ATP binding.

It belongs to the class-II aminoacyl-tRNA synthetase family. Type 1 subfamily. In terms of assembly, homodimer.

Its subcellular location is the cytoplasm. It catalyses the reaction tRNA(Asp) + L-aspartate + ATP = L-aspartyl-tRNA(Asp) + AMP + diphosphate. Its function is as follows. Catalyzes the attachment of L-aspartate to tRNA(Asp) in a two-step reaction: L-aspartate is first activated by ATP to form Asp-AMP and then transferred to the acceptor end of tRNA(Asp). This chain is Aspartate--tRNA ligase, found in Bacteroides thetaiotaomicron (strain ATCC 29148 / DSM 2079 / JCM 5827 / CCUG 10774 / NCTC 10582 / VPI-5482 / E50).